Consider the following 257-residue polypeptide: Methylthioribulose-1-phosphate dehydratase (257 aa).

A disordered region spans residues 1–33 (MVSSQEKMASISDIIQKDEDSGSEKTESQDKEH). Positions 15 to 33 (IQKDEDSGSEKTESQDKEH) are enriched in basic and acidic residues. Residue Cys-107 coordinates substrate. Residues His-125 and His-127 each coordinate Zn(2+). The active-site Proton donor/acceptor is Glu-149. His-205 contributes to the Zn(2+) binding site.

It belongs to the aldolase class II family. MtnB subfamily. Requires Zn(2+) as cofactor.

It localises to the cytoplasm. It carries out the reaction 5-(methylsulfanyl)-D-ribulose 1-phosphate = 5-methylsulfanyl-2,3-dioxopentyl phosphate + H2O. It participates in amino-acid biosynthesis; L-methionine biosynthesis via salvage pathway; L-methionine from S-methyl-5-thio-alpha-D-ribose 1-phosphate: step 2/6. Catalyzes the dehydration of methylthioribulose-1-phosphate (MTRu-1-P) into 2,3-diketo-5-methylthiopentyl-1-phosphate (DK-MTP-1-P). Functions in the methionine salvage pathway. May play a role in apoptosis. The polypeptide is Methylthioribulose-1-phosphate dehydratase (Esox lucius (Northern pike)).